We begin with the raw amino-acid sequence, 166 residues long: Protein-export protein SecB (166 aa).

Belongs to the SecB family. As to quaternary structure, homotetramer, a dimer of dimers. One homotetramer interacts with 1 SecA dimer.

Its subcellular location is the cytoplasm. Its function is as follows. One of the proteins required for the normal export of preproteins out of the cell cytoplasm. It is a molecular chaperone that binds to a subset of precursor proteins, maintaining them in a translocation-competent state. It also specifically binds to its receptor SecA. The chain is Protein-export protein SecB from Actinobacillus pleuropneumoniae serotype 5b (strain L20).